The following is a 270-amino-acid chain: L-fucose dehydrogenase (270 aa).

Residues Arg-19, Ile-21, Asp-40, Lys-41, Asp-62, Val-63, Asn-89, Tyr-154, Lys-158, Ile-187, Thr-189, and Leu-191 each coordinate NAD(+). Tyr-154 functions as the Proton acceptor in the catalytic mechanism.

This sequence belongs to the short-chain dehydrogenases/reductases (SDR) family. In terms of assembly, homotetramer. Detected in retina.

The protein localises to the cytoplasm. It catalyses the reaction L-fucose + NAD(+) = L-fucono-1,5-lactone + NADH + H(+). It carries out the reaction D-arabinose + NAD(+) = D-arabinono-1,5-lactone + NADH + H(+). The catalysed reaction is L-galactose + NAD(+) = L-galactono-1,5-lactone + NADH + H(+). It participates in carbohydrate degradation; L-fucose degradation. Functionally, catalyzes the NAD(+)-dependent oxidation of L-fucose, yielding L-fucono-1,5-lactone, which rapidly converts spontaneously to L-fucone-1,4-lactone. Can also act on D-arabinose and L-galactose, with lower catalytic efficiency. Does not use NADPH. May be the initial enzyme of the putative L-fucose degradation pathway in mammals. The protein is L-fucose dehydrogenase (HSD17B14) of Bos taurus (Bovine).